Consider the following 78-residue polypeptide: Major outer membrane lipoprotein Lpp (78 aa).

An N-terminal signal peptide occupies residues 1–20; it reads MKATKLVLGAVILGSTLLAG. Cysteine 21 carries N-palmitoyl cysteine lipidation. A lipid anchor (S-diacylglycerol cysteine) is attached at cysteine 21. 2 consecutive repeats follow at residues 24-34 and 38-48; these read NAKIDQLSSDV and NAKVDQLSNDV. Positions 27–75 form a coiled coil; sequence IDQLSSDVQTLNAKVDQLSNDVNAMRSDVQAAKDDAARANQRLDNMATK. N6-murein peptidoglycan lysine is present on lysine 78.

This sequence belongs to the Lpp family. As to quaternary structure, homotrimer.

It localises to the cell outer membrane. It is found in the secreted. The protein resides in the cell wall. In terms of biological role, a highly abundant outer membrane lipoprotein that controls the distance between the inner and outer membranes. The only protein known to be covalently linked to the peptidoglycan network (PGN). Also non-covalently binds the PGN. The link between the cell outer membrane and PGN contributes to maintenance of the structural and functional integrity of the cell envelope, and maintains the correct distance between the PGN and the outer membrane. This chain is Major outer membrane lipoprotein Lpp, found in Shigella flexneri.